Reading from the N-terminus, the 668-residue chain is MKGKTMIDRKEDNQFHLVSKYEPSGDQPQAIETLVDNIKGGEKAQILKGATGTGKTYTMSQVIQRVNKPTLVIAHNKTLAGQLYGEFKEFFPDNAVEYFVSYYDYYQPEAYVPSSDTYIEKDSSINDEIDKLRHSATSALLERNDVIVVASVSCIYGLGSPKEYADSAVSLRPGQEISRDKLLNDLVDIQFERNDIDFQRGKFRVRGDVVEIFPASRDENAFRVEFFGDEIDRICEIESLTGRNLGEVEHLVLFPATHFMTNEEHMEEAIKNIMEEMEVQVNQFEAEGKLIEAQRIRQRTEYDVEMLREMGYTNGIENYSRHMDGRKEGEPPFTLLDFFPEDFLIMIDESHMTMGQIKGMYNGDQARKKMLVDYGFRLPSALDNRPLRREEFESHVHQIVYVSATPGDYEMEQTETVVEQIIRPTGLLDPEVEVRPTMGQMDDLLGEINARTEKGERVFVTTLTKKMAEDLTDYLKEMGVKVKYMHSDIKTLERTEIIRDLRLGVFDVLIGINLLREGIDVPEVSLVAILDADKEGFLRNERGLIQTIGRAARNSDGHVIMYADKITESMQKAMDETARRREIQMAYNKEHGITPQTIKKEIRDLISITKTNEAEVAEDTVNYSAMNKKERQEAIKKLQKQMHEAAELLDFELAAQIRDMVLELKSMD.

Residues 36 to 423 (DNIKGGEKAQ…TETVVEQIIR (388 aa)) form the Helicase ATP-binding domain. 49-56 (GATGTGKT) contacts ATP. A Beta-hairpin motif is present at residues 102-125 (YYDYYQPEAYVPSSDTYIEKDSSI). Residues 440-606 (QMDDLLGEIN…TIKKEIRDLI (167 aa)) form the Helicase C-terminal domain. The 36-residue stretch at 632-667 (QEAIKKLQKQMHEAAELLDFELAAQIRDMVLELKSM) folds into the UVR domain.

This sequence belongs to the UvrB family. Forms a heterotetramer with UvrA during the search for lesions. Interacts with UvrC in an incision complex.

The protein localises to the cytoplasm. Functionally, the UvrABC repair system catalyzes the recognition and processing of DNA lesions. A damage recognition complex composed of 2 UvrA and 2 UvrB subunits scans DNA for abnormalities. Upon binding of the UvrA(2)B(2) complex to a putative damaged site, the DNA wraps around one UvrB monomer. DNA wrap is dependent on ATP binding by UvrB and probably causes local melting of the DNA helix, facilitating insertion of UvrB beta-hairpin between the DNA strands. Then UvrB probes one DNA strand for the presence of a lesion. If a lesion is found the UvrA subunits dissociate and the UvrB-DNA preincision complex is formed. This complex is subsequently bound by UvrC and the second UvrB is released. If no lesion is found, the DNA wraps around the other UvrB subunit that will check the other stand for damage. The chain is UvrABC system protein B from Streptococcus thermophilus (strain CNRZ 1066).